The sequence spans 119 residues: Protein Wnt-4 (119 aa).

S1 carries O-palmitoleoyl serine; by PORCN lipidation. Cystine bridges form between C69/C100 and C85/C95. N-linked (GlcNAc...) asparagine glycosylation occurs at N86.

Belongs to the Wnt family. Palmitoleoylation is required for efficient binding to frizzled receptors. Depalmitoleoylation leads to Wnt signaling pathway inhibition.

Its subcellular location is the secreted. The protein resides in the extracellular space. It is found in the extracellular matrix. Ligand for members of the frizzled family of seven transmembrane receptors. Plays an important role in embryonic development. The sequence is that of Protein Wnt-4 (WNT4) from Meleagris gallopavo (Wild turkey).